Consider the following 420-residue polypeptide: 26S proteasome non-ATPase regulatory subunit 4 (420 aa).

In terms of domain architecture, VWFA spans 1–174 (MSQEATIIAV…TGSHLISVAP (174 aa)). 3 consecutive UIM domains span residues 210–229 (AEDPDLLYALRVSMEDQRMR), 255–274 (SEEAMLQQALAMSMQMNNTE), and 288–307 (SEEDQIAYALRMSLQQMGEE). Residues 392 to 420 (RKAINALTKSQSQRGSKKDEKEDEDKQNS) form a disordered region. The segment covering 407-420 (SKKDEKEDEDKQNS) has biased composition (basic and acidic residues).

Belongs to the proteasome subunit S5A family. In terms of assembly, the 26S proteasome is composed of a core protease, known as the 20S proteasome, capped at one or both ends by the 19S regulatory complex (RC). The RC is composed of at least 18 different subunits in two subcomplexes, the base and the lid, which form the portions proximal and distal to the 20S proteolytic core, respectively.

Its function is as follows. Binds and presumably selects ubiquitin-conjugates for destruction. The sequence is that of 26S proteasome non-ATPase regulatory subunit 4 from Schistosoma mansoni (Blood fluke).